The primary structure comprises 414 residues: Snake venom metalloproteinase (414 aa).

An N-terminal signal peptide occupies residues 1 to 20; that stretch reads MIEVLLVTICLAVFPYQGSS. A propeptide spanning residues 21–190 is cleaved from the precursor; that stretch reads IILESGNVND…KASDLNFNSD (170 aa). A Pyrrolidone carboxylic acid modification is found at Q191. The Peptidase M12B domain maps to 197 to 393; the sequence is RYVELVIVAD…YKPQCILNKP (197 aa). The Ca(2+) site is built by E200 and D284. Disulfide bonds link C308-C388 and C348-C355. Residue H333 participates in Zn(2+) binding. Residue E334 is part of the active site. H337 and H343 together coordinate Zn(2+). The Ca(2+) site is built by C388 and N391. Positions 394–414 are excised as a propeptide; that stretch reads LRIDPVSTPVSGNELLEAGEE.

The protein belongs to the venom metalloproteinase (M12B) family. P-I subfamily. Monomer. The cofactor is Zn(2+). Expressed by the venom gland.

It localises to the secreted. Snake venom metalloproteinase that impairs hemostasis in the envenomed animal. This Crotalus molossus molossus (Northern black-tailed rattlesnake) protein is Snake venom metalloproteinase.